The chain runs to 441 residues: ATP-dependent protease ATPase subunit HslU (441 aa).

Residues Ile18, 60–65 (GVGKTE), Asp254, Glu319, and Arg391 contribute to the ATP site.

It belongs to the ClpX chaperone family. HslU subfamily. A double ring-shaped homohexamer of HslV is capped on each side by a ring-shaped HslU homohexamer. The assembly of the HslU/HslV complex is dependent on binding of ATP.

It is found in the cytoplasm. In terms of biological role, ATPase subunit of a proteasome-like degradation complex; this subunit has chaperone activity. The binding of ATP and its subsequent hydrolysis by HslU are essential for unfolding of protein substrates subsequently hydrolyzed by HslV. HslU recognizes the N-terminal part of its protein substrates and unfolds these before they are guided to HslV for hydrolysis. The polypeptide is ATP-dependent protease ATPase subunit HslU (Shewanella frigidimarina (strain NCIMB 400)).